The sequence spans 276 residues: Large ribosomal subunit protein uL2 (276 aa).

Residues 223 to 276 are disordered; it reads VVMNPVDHPHGGGEGKSSGGRHPVSPWGKKTRGPKTRNNKVTDRLIIRRRNAKR. Basic residues predominate over residues 251–260; it reads KKTRGPKTRN.

It belongs to the universal ribosomal protein uL2 family. As to quaternary structure, part of the 50S ribosomal subunit. Forms a bridge to the 30S subunit in the 70S ribosome.

One of the primary rRNA binding proteins. Required for association of the 30S and 50S subunits to form the 70S ribosome, for tRNA binding and peptide bond formation. It has been suggested to have peptidyltransferase activity; this is somewhat controversial. Makes several contacts with the 16S rRNA in the 70S ribosome. The protein is Large ribosomal subunit protein uL2 of Hyphomonas neptunium (strain ATCC 15444).